Consider the following 669-residue polypeptide: Translation factor GUF1, mitochondrial (669 aa).

The N-terminal 49 residues, 1–49, are a transit peptide targeting the mitochondrion; the sequence is MWTLVGRGWGCARALAPRATGAALLVAPGPRSAPTLGAAPESWATDRLY. In terms of domain architecture, tr-type G spans 66–247; it reads ENIRNFSIVA…AIIERIPPPK (182 aa). GTP contacts are provided by residues 75-82, 140-144, and 194-197; these read AHVDHGKS, DTPGH, and NKID.

The protein belongs to the TRAFAC class translation factor GTPase superfamily. Classic translation factor GTPase family. LepA subfamily.

The protein localises to the mitochondrion inner membrane. The catalysed reaction is GTP + H2O = GDP + phosphate + H(+). Functionally, promotes mitochondrial protein synthesis. May act as a fidelity factor of the translation reaction, by catalyzing a one-codon backward translocation of tRNAs on improperly translocated ribosomes. Binds to mitochondrial ribosomes in a GTP-dependent manner. In Homo sapiens (Human), this protein is Translation factor GUF1, mitochondrial.